The primary structure comprises 226 residues: Brachyurin (226 aa).

The Peptidase S1 domain maps to 1–223 (IVGGVEAVPN…FLDWIQTQTG (223 aa)). A disulfide bridge connects residues Cys26 and Cys42. Active-site charge relay system residues include His41 and Asp87. Intrachain disulfides connect Cys151–Cys164 and Cys174–Cys200. Catalysis depends on Ser178, which acts as the Charge relay system.

Belongs to the peptidase S1 family.

It carries out the reaction Hydrolysis of proteins, with broad specificity for peptide bonds. Native collagen is cleaved about 75% of the length of the molecule from the N-terminus. Low activity on small molecule substrates of both trypsin and chymotrypsin.. In terms of biological role, this enzyme is a serine protease capable of degrading the native triple helix of collagen. This Leptuca pugilator (Atlantic sand fiddler crab) protein is Brachyurin.